The following is a 343-amino-acid chain: MVTQIISTMETQASNGPGSVGILNGTNGAADDSKTNLIVNYLPQNMTQEEFKSLFGSIGEIESCKLVRDKITGQSLGYGFVNYVDPNDADKAINTLNGLKLQTKTIKVSYARPSSASIRDANLYVSSLPKTMNQKEMEQLFSQYGRIITSRILVDQVTGSVSRGVGFIRFDKRIEAEEAIKGLNGQKPLGASEPITVKFANNPSQKTGQALLTHLYQTTARRYTGPLHHQTQRFRFSPITIDSVTNLAGVSLTGPTTAGWCIFVYNLSPEADESVLWQLFGPFGAVTNVKVIRDFTTNKCKGFGFVTMTNYDEAAMAIASLNGYRLGDRVLQVSFKTSKQHKA.

RRM domains are found at residues 35-113 (TNLI…YARP), 121-202 (ANLY…FANN), and 260-338 (WCIF…FKTS).

The protein belongs to the RRM elav family.

Functionally, RNA-binding protein that binds to AU-rich sequences (AREs) of target mRNAs. May also bind poly-A tracts via RRM 3. May be involved in neuronal differentiation and maintenance. In Xenopus tropicalis (Western clawed frog), this protein is ELAV-like protein 3.